The sequence spans 204 residues: Leucyl/phenylalanyl-tRNA--protein transferase (204 aa).

The protein belongs to the L/F-transferase family.

It localises to the cytoplasm. The enzyme catalyses N-terminal L-lysyl-[protein] + L-leucyl-tRNA(Leu) = N-terminal L-leucyl-L-lysyl-[protein] + tRNA(Leu) + H(+). It catalyses the reaction N-terminal L-arginyl-[protein] + L-leucyl-tRNA(Leu) = N-terminal L-leucyl-L-arginyl-[protein] + tRNA(Leu) + H(+). The catalysed reaction is L-phenylalanyl-tRNA(Phe) + an N-terminal L-alpha-aminoacyl-[protein] = an N-terminal L-phenylalanyl-L-alpha-aminoacyl-[protein] + tRNA(Phe). Its function is as follows. Functions in the N-end rule pathway of protein degradation where it conjugates Leu, Phe and, less efficiently, Met from aminoacyl-tRNAs to the N-termini of proteins containing an N-terminal arginine or lysine. This is Leucyl/phenylalanyl-tRNA--protein transferase from Rhizobium etli (strain ATCC 51251 / DSM 11541 / JCM 21823 / NBRC 15573 / CFN 42).